The sequence spans 133 residues: Ubiquitin-like FUBI-ribosomal protein eS30 fusion protein (133 aa).

The Ubiquitin-like domain maps to 1-74; sequence MQLFVRAQEL…LEVAGRMLGG (74 aa). Positions 84 to 110 are disordered; the sequence is GKVRGQTPKVAKQEKKKKKTGRAKRRM. A compositionally biased stretch (basic residues) spans 97–110; sequence EKKKKKTGRAKRRM. The residue at position 125 (K125) is an N6-succinyllysine.

In the N-terminal section; belongs to the ubiquitin family. The protein in the C-terminal section; belongs to the eukaryotic ribosomal protein eS30 family. As to quaternary structure, component of the 40S subunit of the ribosome. FUBI is cleaved from ribosomal protein S30 by the deubiquitinase USP36 before the assembly of ribosomal protein S30 into pre-40S ribosomal particles. FUBI removal from ribosomal protein S30 is a crucial event for the final maturation of pre-40S particles.

The protein resides in the cytoplasm. It is found in the nucleus. Functionally, may have pro-apoptotic activity. Component of the 40S subunit of the ribosome. Contributes to the assembly and function of 40S ribosomal subunits. In Homo sapiens (Human), this protein is Ubiquitin-like FUBI-ribosomal protein eS30 fusion protein.